An 859-amino-acid polypeptide reads, in one-letter code: Autoinducer 2 sensor kinase/phosphatase LuxQ (859 aa).

Transmembrane regions (helical) follow at residues 15-35 (ATLI…GIFI) and 280-300 (IQHI…ALMS). A Histidine kinase domain is found at 489–711 (KMSHEIRTPI…TFVITLPVKD (223 aa)). His-492 is subject to Phosphohistidine; by autocatalysis. In terms of domain architecture, Response regulatory spans 736-851 (KVLLVEDNHT…ALHEAFVDFK (116 aa)). Asp-785 bears the 4-aspartylphosphate mark.

In terms of assembly, binds the complex formed by AI-2 and LuxP.

It is found in the cell inner membrane. The catalysed reaction is ATP + protein L-histidine = ADP + protein N-phospho-L-histidine.. Functionally, at low cell density, in absence of AI-2 (autoinducer 2), LuxQ has a kinase activity and autophosphorylates on a histidine residue. The phosphoryl group is then transferred to an aspartate residue in the response regulator domain. The phosphoryl group is transferred to LuxU, and ultimately to LuxO. At high cell density, in the presence of AI-2, the kinase activity is inactivated, and the response regulator domain has a phosphatase activity. This chain is Autoinducer 2 sensor kinase/phosphatase LuxQ (luxQ), found in Vibrio harveyi (Beneckea harveyi).